The chain runs to 354 residues: Small ribosomal subunit protein uS2 (354 aa).

This sequence belongs to the universal ribosomal protein uS2 family.

The polypeptide is Small ribosomal subunit protein uS2 (Methylorubrum populi (strain ATCC BAA-705 / NCIMB 13946 / BJ001) (Methylobacterium populi)).